Here is a 535-residue protein sequence, read N- to C-terminus: T-complex protein 1 subunit beta (535 aa).

At Ala-2 the chain carries N-acetylalanine. Ser-3 carries the post-translational modification Phosphoserine. Lys-13 carries the N6-acetyllysine modification. An ADP-binding site is contributed by Gly-44. ATP is bound at residue Gly-44. Ser-60 bears the Phosphoserine mark. Residue Asp-97 coordinates Mg(2+). ADP contacts are provided by Gly-98, Thr-99, Thr-100, and Ser-101. Residues Gly-98, Thr-99, and Thr-100 each coordinate ATP. An N6-acetyllysine modification is found at Lys-154. Ser-168 and Ser-169 together coordinate ADP. Lys-181 is modified (N6-acetyllysine). Residue Lys-248 forms a Glycyl lysine isopeptide (Lys-Gly) (interchain with G-Cter in SUMO2) linkage. Ser-260 carries the post-translational modification Phosphoserine. Phosphothreonine is present on Thr-261. 3 residues coordinate ADP: Gly-410, Glu-495, and Lys-500. ATP contacts are provided by Glu-495 and Lys-500.

The protein belongs to the TCP-1 chaperonin family. As to quaternary structure, component of the chaperonin-containing T-complex (TRiC), a hexadecamer composed of two identical back-to-back stacked rings enclosing a protein folding chamber. Each ring is made up of eight different subunits: TCP1/CCT1, CCT2, CCT3, CCT4, CCT5, CCT6A/CCT6, CCT7, CCT8. Interacts with PACRG. Interacts with FLCN. Interacts with DLEC1. Interacts with SVEP1.

The protein resides in the cytoplasm. The enzyme catalyses ATP + H2O = ADP + phosphate + H(+). Component of the chaperonin-containing T-complex (TRiC), a molecular chaperone complex that assists the folding of actin, tubulin and other proteins upon ATP hydrolysis. The TRiC complex mediates the folding of WRAP53/TCAB1, thereby regulating telomere maintenance. As part of the TRiC complex may play a role in the assembly of BBSome, a complex involved in ciliogenesis regulating transports vesicles to the cilia. The chain is T-complex protein 1 subunit beta (Cct2) from Rattus norvegicus (Rat).